A 279-amino-acid chain; its full sequence is Energy-coupling factor transporter ATP-binding protein EcfA1 (279 aa).

In terms of domain architecture, ABC transporter spans 5 to 240; that stretch reads ITVNNLFFKY…GNRLISLGLD (236 aa). Residue 40–47 participates in ATP binding; sequence GHNGSGKS.

It belongs to the ABC transporter superfamily. Energy-coupling factor EcfA family. Forms a stable energy-coupling factor (ECF) transporter complex composed of 2 membrane-embedded substrate-binding proteins (S component), 2 ATP-binding proteins (A component) and 2 transmembrane proteins (T component).

It localises to the cell membrane. Its function is as follows. ATP-binding (A) component of a common energy-coupling factor (ECF) ABC-transporter complex. Unlike classic ABC transporters this ECF transporter provides the energy necessary to transport a number of different substrates. In Streptococcus agalactiae serotype Ia (strain ATCC 27591 / A909 / CDC SS700), this protein is Energy-coupling factor transporter ATP-binding protein EcfA1.